A 249-amino-acid polypeptide reads, in one-letter code: Small ribosomal subunit protein eS6 (249 aa).

Disordered regions lie at residues 161 to 181 (PLAKEGKKPRTKAPKIQRLVT) and 194 to 249 (LKKQ…SSQK). The span at 216 to 229 (RSKEAKEKRQEQIA) shows a compositional bias: basic and acidic residues. 5 positions are modified to phosphoserine: serine 235, serine 236, serine 240, serine 244, and serine 247. Residues 236-249 (SLRASTSKSESSQK) are compositionally biased toward low complexity.

This sequence belongs to the eukaryotic ribosomal protein eS6 family. Component of the small ribosomal subunit. Part of the small subunit (SSU) processome, composed of more than 70 proteins and the RNA chaperone small nucleolar RNA (snoRNA) U3. Post-translationally, ribosomal protein S6 is the major substrate of protein kinases in eukaryote ribosomes. The phosphorylation is stimulated by growth factors, tumor promoting agents, and mitogens. It is dephosphorylated at growth arrest.

The protein resides in the cytoplasm. It localises to the nucleus. Its subcellular location is the nucleolus. Component of the 40S small ribosomal subunit. Plays an important role in controlling cell growth and proliferation through the selective translation of particular classes of mRNA. Part of the small subunit (SSU) processome, first precursor of the small eukaryotic ribosomal subunit. During the assembly of the SSU processome in the nucleolus, many ribosome biogenesis factors, an RNA chaperone and ribosomal proteins associate with the nascent pre-rRNA and work in concert to generate RNA folding, modifications, rearrangements and cleavage as well as targeted degradation of pre-ribosomal RNA by the RNA exosome. The protein is Small ribosomal subunit protein eS6 (rps6) of Xenopus laevis (African clawed frog).